The following is a 148-amino-acid chain: MKVIFTQDVKGKGKKGEIKDVPVGYANNFLIKNNYAVEATPGNLKQLEQQNKRAEADRQKEIDDAKALKSKLEEIEVEVSAKTGEGGKLFGSVSTKQIAEALKTQHDIKIDKRKMDLPQGIHALGYTNVPVKLDKEVEGTIRVHTVEK.

This sequence belongs to the bacterial ribosomal protein bL9 family.

In terms of biological role, binds to the 23S rRNA. The protein is Large ribosomal subunit protein bL9 of Staphylococcus haemolyticus (strain JCSC1435).